The chain runs to 644 residues: Chaperone protein DnaK (644 aa).

Residue Thr-195 is modified to Phosphothreonine; by autocatalysis. The interval 598-644 is disordered; the sequence is KQAAPGAGAPGAGPGPEAAGGAQQAQAEPKKDEGVIDAEYVDVDEKK. Residues 612-624 are compositionally biased toward low complexity; sequence GPEAAGGAQQAQA. Acidic residues predominate over residues 632–644; sequence VIDAEYVDVDEKK.

The protein belongs to the heat shock protein 70 family.

Acts as a chaperone. In Koribacter versatilis (strain Ellin345), this protein is Chaperone protein DnaK.